Here is a 205-residue protein sequence, read N- to C-terminus: Putative STAG3-like protein 1 (205 aa).

Positions 10–95 (PKVTCRDVLP…GRFKDWMVSM (86 aa)) constitute an SCD domain.

Belongs to the SCC3 family.

The protein localises to the nucleus. The polypeptide is Putative STAG3-like protein 1 (STAG3L1) (Homo sapiens (Human)).